The chain runs to 464 residues: GDNF family receptor alpha-2 (464 aa).

Positions 1 to 21 are cleaved as a signal peptide; that stretch reads MILANAFCLFFFLDETLRSLA. Disulfide bonds link Cys-40-Cys-93, Cys-47-Cys-53, Cys-63-Cys-78, Cys-95-Cys-105, Cys-161-Cys-222, Cys-168-Cys-174, Cys-185-Cys-200, Cys-195-Cys-241, Cys-224-Cys-229, Cys-251-Cys-323, Cys-258-Cys-264, Cys-275-Cys-293, Cys-285-Cys-347, and Cys-325-Cys-335. A glycan (N-linked (GlcNAc...) asparagine) is linked at Asn-52. Asn-357 is a glycosylation site (N-linked (GlcNAc...) asparagine). Polar residues predominate over residues 360-374; the sequence is DVNLSPKSPPFQATQ. The tract at residues 360–392 is disordered; the sequence is DVNLSPKSPPFQATQAPRVDKTPSLPDDLSDST. A compositionally biased stretch (low complexity) spans 381–392; it reads TPSLPDDLSDST. Asn-413 carries an N-linked (GlcNAc...) asparagine glycan. Asn-440 is lipidated: GPI-anchor amidated asparagine. A propeptide spans 441–464 (removed in mature form); that stretch reads SGPRRTRPSAALTAASFLMLKLAL.

It belongs to the GDNFR family. As to quaternary structure, interacts with NRTN ligand and RET: forms a 2:2:2 ternary complex composed of NRTN ligand, GFRA2 and RET receptor. Also forms a 4:4:4 tetrameric complex composed of 4 copies of NRTN ligand, GFRA2 and RET receptor, which prevents endocytosis of RET. Interacts with SORL1.

The protein resides in the cell membrane. Its function is as follows. Receptor for neurturin (NRTN), a growth factor that supports the survival of sympathetic neurons. NRTN-binding leads to autophosphorylation and activation of the RET receptor. Also able to mediate GDNF signaling through the RET tyrosine kinase receptor. This Bos taurus (Bovine) protein is GDNF family receptor alpha-2 (GFRA2).